The primary structure comprises 122 residues: MIQQESRLKVADNSGAREILTIKVLGGSGRKFANIGDVIVATVKQATPGGAVKKGDVVKAVIVRTKTGARRSDGSYIKFDDNAAVIIRDDKTPRGTRIFGPVARELREGGYMRIVSLAPEVL.

It belongs to the universal ribosomal protein uL14 family. Part of the 50S ribosomal subunit. Forms a cluster with proteins L3 and L19. In the 70S ribosome, L14 and L19 interact and together make contacts with the 16S rRNA in bridges B5 and B8.

Binds to 23S rRNA. Forms part of two intersubunit bridges in the 70S ribosome. The protein is Large ribosomal subunit protein uL14 of Streptococcus thermophilus (strain CNRZ 1066).